A 196-amino-acid polypeptide reads, in one-letter code: dITP/XTP pyrophosphatase (196 aa).

10 to 15 (TTNPHK) is a binding site for substrate. D68 (proton acceptor) is an active-site residue. D68 contributes to the Mg(2+) binding site. Substrate-binding positions include S69, 148-151 (FGYD), and 175-176 (HR).

This sequence belongs to the HAM1 NTPase family. In terms of assembly, homodimer. Requires Mg(2+) as cofactor.

The enzyme catalyses XTP + H2O = XMP + diphosphate + H(+). It carries out the reaction dITP + H2O = dIMP + diphosphate + H(+). The catalysed reaction is ITP + H2O = IMP + diphosphate + H(+). In terms of biological role, pyrophosphatase that catalyzes the hydrolysis of nucleoside triphosphates to their monophosphate derivatives, with a high preference for the non-canonical purine nucleotides XTP (xanthosine triphosphate), dITP (deoxyinosine triphosphate) and ITP. Seems to function as a house-cleaning enzyme that removes non-canonical purine nucleotides from the nucleotide pool, thus preventing their incorporation into DNA/RNA and avoiding chromosomal lesions. In Thermotoga maritima (strain ATCC 43589 / DSM 3109 / JCM 10099 / NBRC 100826 / MSB8), this protein is dITP/XTP pyrophosphatase.